Here is a 563-residue protein sequence, read N- to C-terminus: Forkhead box protein O (563 aa).

Disordered regions lie at residues 1–72 (MDDF…DPQQ) and 177–243 (KSVR…SYQL). At Thr-43 the chain carries Phosphothreonine; by PKB/AKT1. A compositionally biased stretch (polar residues) spans 58 to 72 (TKASNQQLANGDPQQ). The segment at residues 90 to 196 (WGNLSYADLI…ETSRYEKRRG (107 aa)) is a DNA-binding region (fork-head). At Ser-185 the chain carries Phosphoserine; by PKB/AKT1. Residues 216-225 (ATPSPSSSVS) are compositionally biased toward polar residues. The residue at position 253 (Ser-253) is a Phosphoserine; by PKB/AKT1. 3 positions are modified to phosphoserine: Ser-256, Ser-257, and Ser-262. The tract at residues 317–371 (AASGLPTQPPPPYQPPQHPQHTQGYALNGPGLSPNSVTTTMSPAYPNSEPSSDSL) is disordered. Over residues 323-334 (TQPPPPYQPPQH) the composition is skewed to pro residues. Residues 349–358 (SPNSVTTTMS) show a composition bias toward polar residues.

Interacts with melt.

It localises to the cytoplasm. The protein localises to the nucleus. Transcription factor involved in the regulation of the insulin signaling pathway. Consistently activates both the downstream target Thor\d4EBP and the feedback control target InR. Involved in negative regulation of the cell cycle, modulating cell growth and proliferation. In response to cellular stresses, such as nutrient deprivation or increased levels of reactive oxygen species, foxo is activated and inhibits growth through the action of target genes such as Thor. Foxo activated in the adult fat body can regulate lifespan in adults; an insulin peptide itself may function as one secondary messenger of insulin-regulated aging. Also regulates Lip4, homolog of human acid lipases, thereby acting as a key modulator of lipid metabolism by insulin signaling and integrates insulin responses to glucose and lipid homeostasis. The protein is Forkhead box protein O of Drosophila mojavensis (Fruit fly).